Reading from the N-terminus, the 872-residue chain is Alanine--tRNA ligase (872 aa).

Zn(2+)-binding residues include H567, H571, C669, and H673.

It belongs to the class-II aminoacyl-tRNA synthetase family. Zn(2+) is required as a cofactor.

It localises to the cytoplasm. It carries out the reaction tRNA(Ala) + L-alanine + ATP = L-alanyl-tRNA(Ala) + AMP + diphosphate. Catalyzes the attachment of alanine to tRNA(Ala) in a two-step reaction: alanine is first activated by ATP to form Ala-AMP and then transferred to the acceptor end of tRNA(Ala). Also edits incorrectly charged Ser-tRNA(Ala) and Gly-tRNA(Ala) via its editing domain. This chain is Alanine--tRNA ligase, found in Streptococcus thermophilus (strain ATCC BAA-491 / LMD-9).